The following is a 349-amino-acid chain: N-acetyltaurine hydrolase (349 aa).

A divalent metal cation-binding residues include His26, His28, Glu169, His201, His230, and Asp298.

Belongs to the metallo-dependent hydrolases superfamily. Phosphotriesterase family. The cofactor is a divalent metal cation.

Its subcellular location is the cytoplasm. The protein resides in the cytosol. The enzyme catalyses N-acetyltaurine + H2O = taurine + acetate. It catalyses the reaction N-propanoyltaurine + H2O = propanoate + taurine. It carries out the reaction N-acetyl-L-methionine + H2O = L-methionine + acetate. The catalysed reaction is N-acetyl-L-isoleucine + H2O = L-isoleucine + acetate. The enzyme catalyses N-acetyl-L-leucine + H2O = L-leucine + acetate. It catalyses the reaction N-acetyl-L-valine + H2O = L-valine + acetate. N-acetyltaurine hydrolase that catalyzes the hydrolysis of N-acetyltaurine into taurine and acetate. PTER also acts on other N-acetyl amino acids (Met, Ile, Leu, Val) and N-propionyltaurine, but at lower rates. The polypeptide is N-acetyltaurine hydrolase (pter) (Danio rerio (Zebrafish)).